The primary structure comprises 233 residues: 2,3,4,5-tetrahydropyridine-2,6-dicarboxylate N-acetyltransferase (233 aa).

This sequence belongs to the transferase hexapeptide repeat family. DapH subfamily.

The catalysed reaction is (S)-2,3,4,5-tetrahydrodipicolinate + acetyl-CoA + H2O = L-2-acetamido-6-oxoheptanedioate + CoA. Its pathway is amino-acid biosynthesis; L-lysine biosynthesis via DAP pathway; LL-2,6-diaminopimelate from (S)-tetrahydrodipicolinate (acetylase route): step 1/3. Its function is as follows. Catalyzes the transfer of an acetyl group from acetyl-CoA to tetrahydrodipicolinate. The sequence is that of 2,3,4,5-tetrahydropyridine-2,6-dicarboxylate N-acetyltransferase from Petrotoga mobilis (strain DSM 10674 / SJ95).